The chain runs to 362 residues: G-protein coupled receptor 6 (362 aa).

The Extracellular portion of the chain corresponds to 1–74 (MNASAASLND…PGLLLPAVNP (74 aa)). 3 N-linked (GlcNAc...) asparagine glycosylation sites follow: Asn-2, Asn-9, and Asn-51. A helical membrane pass occupies residues 75–94 (WDVLLCVSGTVIAGENALVV). Topologically, residues 95 to 106 (ALIASTPALRTP) are cytoplasmic. A helical transmembrane segment spans residues 107–130 (MFVLVGSLATADLLAGCGLILHFV). At 131–142 (FQYLVPSETVSL) the chain is on the extracellular side. Residues 143 to 164 (LTVGFLVASFAASVSSLLAITV) traverse the membrane as a helical segment. Over 165–185 (DRYLSLYNALTYYSRRTLLGV) the chain is Cytoplasmic. A helical transmembrane segment spans residues 186 to 205 (HLLLAATWTVSLGLGLLPVL). At 206-230 (GWNCLAERAACSVVRPLARSHVALL) the chain is on the extracellular side. A helical transmembrane segment spans residues 231–249 (SAAFFMVFGIMLHLYVRIC). Residues 250-277 (QVVWRHAHQIALQQHCLAPPHLAATRKG) are Cytoplasmic-facing. Residues 278–304 (VGTLAVVLGTFGASWLPFAIYCVVGSH) traverse the membrane as a helical segment. At 305–309 (EDPAV) the chain is on the extracellular side. The chain crosses the membrane as a helical span at residues 310-331 (YTYATLLPATYNSMINPIIYAF). Topologically, residues 332-362 (RNQEIQRALWLLLCGCFQSKVPFRSRSPSEV) are cytoplasmic. The S-palmitoyl cysteine moiety is linked to residue Cys-345. Phosphoserine is present on residues Ser-356, Ser-358, and Ser-360.

Belongs to the G-protein coupled receptor 1 family.

The protein resides in the cell membrane. Its function is as follows. Orphan receptor with constitutive G(s) signaling activity that activate cyclic AMP. Promotes neurite outgrowth and blocks myelin inhibition in neurons. In Homo sapiens (Human), this protein is G-protein coupled receptor 6 (GPR6).